Reading from the N-terminus, the 655-residue chain is uncharacterized protein (655 aa).

A helical transmembrane segment spans residues 5 to 25 (IIIIIFIVINFINIIISSITF). Disordered regions lie at residues 337–363 (NSDY…NNNN) and 484–525 (DKIG…SDNS). Positions 515–524 (DNNSIGSSDN) are enriched in low complexity. A helical transmembrane segment spans residues 588-608 (ILAVTISAIGIICVALLLTVV).

It localises to the membrane. This is an uncharacterized protein from Dictyostelium discoideum (Social amoeba).